A 242-amino-acid chain; its full sequence is Glutamate transport ATP-binding protein GluA (242 aa).

The ABC transporter domain occupies 2–236 (IKMTGVQKFF…PQTDRAKDFL (235 aa)). ATP is bound at residue 34–41 (GPSGSGKS).

It belongs to the ABC transporter superfamily. In terms of assembly, the complex is composed of two ATP-binding proteins (GluA), two transmembrane proteins (GluC and GluD) and a solute-binding protein (GluB).

It localises to the cell membrane. It catalyses the reaction a polar amino acid(out) + ATP + H2O = a polar amino acid(in) + ADP + phosphate + H(+). The catalysed reaction is L-glutamate(out) + ATP + H2O = L-glutamate(in) + ADP + phosphate + H(+). Functionally, part of the ABC transporter complex GluABCD involved in glutamate uptake. Probably responsible for energy coupling to the transport system. The polypeptide is Glutamate transport ATP-binding protein GluA (Corynebacterium efficiens (strain DSM 44549 / YS-314 / AJ 12310 / JCM 11189 / NBRC 100395)).